Here is a 328-residue protein sequence, read N- to C-terminus: 4-hydroxy-3-methylbut-2-enyl diphosphate reductase (328 aa).

Cys13 serves as a coordination point for [4Fe-4S] cluster. His41 and His75 together coordinate (2E)-4-hydroxy-3-methylbut-2-enyl diphosphate. His41 and His75 together coordinate dimethylallyl diphosphate. Residues His41 and His75 each contribute to the isopentenyl diphosphate site. [4Fe-4S] cluster is bound at residue Cys97. His125 contributes to the (2E)-4-hydroxy-3-methylbut-2-enyl diphosphate binding site. His125 provides a ligand contact to dimethylallyl diphosphate. His125 contributes to the isopentenyl diphosphate binding site. Glu127 functions as the Proton donor in the catalytic mechanism. Thr168 provides a ligand contact to (2E)-4-hydroxy-3-methylbut-2-enyl diphosphate. Cys229 is a binding site for [4Fe-4S] cluster. Residues Ser257, Ser258, Asn259, and Ser306 each coordinate (2E)-4-hydroxy-3-methylbut-2-enyl diphosphate. Dimethylallyl diphosphate is bound by residues Ser257, Ser258, Asn259, and Ser306. Isopentenyl diphosphate contacts are provided by Ser257, Ser258, Asn259, and Ser306.

The protein belongs to the IspH family. [4Fe-4S] cluster is required as a cofactor.

It catalyses the reaction isopentenyl diphosphate + 2 oxidized [2Fe-2S]-[ferredoxin] + H2O = (2E)-4-hydroxy-3-methylbut-2-enyl diphosphate + 2 reduced [2Fe-2S]-[ferredoxin] + 2 H(+). The catalysed reaction is dimethylallyl diphosphate + 2 oxidized [2Fe-2S]-[ferredoxin] + H2O = (2E)-4-hydroxy-3-methylbut-2-enyl diphosphate + 2 reduced [2Fe-2S]-[ferredoxin] + 2 H(+). The protein operates within isoprenoid biosynthesis; dimethylallyl diphosphate biosynthesis; dimethylallyl diphosphate from (2E)-4-hydroxy-3-methylbutenyl diphosphate: step 1/1. It functions in the pathway isoprenoid biosynthesis; isopentenyl diphosphate biosynthesis via DXP pathway; isopentenyl diphosphate from 1-deoxy-D-xylulose 5-phosphate: step 6/6. Its function is as follows. Catalyzes the conversion of 1-hydroxy-2-methyl-2-(E)-butenyl 4-diphosphate (HMBPP) into a mixture of isopentenyl diphosphate (IPP) and dimethylallyl diphosphate (DMAPP). Acts in the terminal step of the DOXP/MEP pathway for isoprenoid precursor biosynthesis. The sequence is that of 4-hydroxy-3-methylbut-2-enyl diphosphate reductase from Chlorobium phaeobacteroides (strain DSM 266 / SMG 266 / 2430).